The sequence spans 159 residues: Ribosomal RNA large subunit methyltransferase H (159 aa).

S-adenosyl-L-methionine contacts are provided by residues Ile75, Gly108, and 127 to 132; that span reads FGRMTL.

Belongs to the RNA methyltransferase RlmH family. As to quaternary structure, homodimer.

The protein localises to the cytoplasm. The enzyme catalyses pseudouridine(1915) in 23S rRNA + S-adenosyl-L-methionine = N(3)-methylpseudouridine(1915) in 23S rRNA + S-adenosyl-L-homocysteine + H(+). Specifically methylates the pseudouridine at position 1915 (m3Psi1915) in 23S rRNA. The sequence is that of Ribosomal RNA large subunit methyltransferase H from Lactococcus lactis subsp. lactis (strain IL1403) (Streptococcus lactis).